A 102-amino-acid chain; its full sequence is NADH-quinone oxidoreductase subunit K 1 (102 aa).

The next 3 membrane-spanning stretches (helical) occupy residues 5-25, 30-50, and 62-82; these read LYEV…CVVA, VIMM…TFVG, and VFSL…LAMV.

The protein belongs to the complex I subunit 4L family. NDH-1 is composed of 14 different subunits. Subunits NuoA, H, J, K, L, M, N constitute the membrane sector of the complex.

The protein resides in the cell inner membrane. The catalysed reaction is a quinone + NADH + 5 H(+)(in) = a quinol + NAD(+) + 4 H(+)(out). In terms of biological role, NDH-1 shuttles electrons from NADH, via FMN and iron-sulfur (Fe-S) centers, to quinones in the respiratory chain. The immediate electron acceptor for the enzyme in this species is believed to be ubiquinone. Couples the redox reaction to proton translocation (for every two electrons transferred, four hydrogen ions are translocated across the cytoplasmic membrane), and thus conserves the redox energy in a proton gradient. This chain is NADH-quinone oxidoreductase subunit K 1, found in Citrifermentans bemidjiense (strain ATCC BAA-1014 / DSM 16622 / JCM 12645 / Bem) (Geobacter bemidjiensis).